The chain runs to 314 residues: Malate dehydrogenase (314 aa).

NAD(+) contacts are provided by residues 11–16 (GSGNIG) and Asp35. Substrate contacts are provided by Arg84 and Arg90. Residues Asn97 and 120-122 (ITN) contribute to the NAD(+) site. Substrate contacts are provided by Asn122 and Arg153. The active-site Proton acceptor is the His177.

It belongs to the LDH/MDH superfamily. MDH type 3 family.

The enzyme catalyses (S)-malate + NAD(+) = oxaloacetate + NADH + H(+). Functionally, catalyzes the reversible oxidation of malate to oxaloacetate. The sequence is that of Malate dehydrogenase from Rickettsia felis (strain ATCC VR-1525 / URRWXCal2) (Rickettsia azadi).